A 501-amino-acid polypeptide reads, in one-letter code: Probable cytosol aminopeptidase (501 aa).

Residues Lys267 and Asp272 each contribute to the Mn(2+) site. Residue Lys279 is part of the active site. The Mn(2+) site is built by Asp290, Asp349, and Glu351. Arg353 is a catalytic residue.

Belongs to the peptidase M17 family. Requires Mn(2+) as cofactor.

It localises to the cytoplasm. It catalyses the reaction Release of an N-terminal amino acid, Xaa-|-Yaa-, in which Xaa is preferably Leu, but may be other amino acids including Pro although not Arg or Lys, and Yaa may be Pro. Amino acid amides and methyl esters are also readily hydrolyzed, but rates on arylamides are exceedingly low.. It carries out the reaction Release of an N-terminal amino acid, preferentially leucine, but not glutamic or aspartic acids.. Its function is as follows. Presumably involved in the processing and regular turnover of intracellular proteins. Catalyzes the removal of unsubstituted N-terminal amino acids from various peptides. The sequence is that of Probable cytosol aminopeptidase from Hamiltonella defensa subsp. Acyrthosiphon pisum (strain 5AT).